The following is a 218-amino-acid chain: Adenylate kinase (218 aa).

10–15 (GAGKGT) is a binding site for ATP. The interval 30–59 (STGDMLRAAVKAGTPLGQQAKAVMDAGQLV) is NMP. AMP-binding positions include threonine 31, arginine 36, 57–59 (QLV), 85–88 (GFPR), and glutamine 92. The segment at 122–159 (GRRSHPASGRTYHVKFNPPKVEGQDDVTGEPLVQREDD) is LID. ATP-binding positions include arginine 123 and 132 to 133 (TY). A disordered region spans residues 127-151 (PASGRTYHVKFNPPKVEGQDDVTGE). AMP-binding residues include arginine 156 and arginine 167. Glycine 203 serves as a coordination point for ATP.

It belongs to the adenylate kinase family. As to quaternary structure, monomer.

The protein resides in the cytoplasm. The enzyme catalyses AMP + ATP = 2 ADP. Its pathway is purine metabolism; AMP biosynthesis via salvage pathway; AMP from ADP: step 1/1. In terms of biological role, catalyzes the reversible transfer of the terminal phosphate group between ATP and AMP. Plays an important role in cellular energy homeostasis and in adenine nucleotide metabolism. This chain is Adenylate kinase, found in Delftia acidovorans (strain DSM 14801 / SPH-1).